Here is a 349-residue protein sequence, read N- to C-terminus: Ribosomal RNA small subunit methyltransferase H 2 (349 aa).

Residues G80–H82, D100, F130, D149, and Q156 each bind S-adenosyl-L-methionine.

This sequence belongs to the methyltransferase superfamily. RsmH family.

It localises to the cytoplasm. It carries out the reaction cytidine(1402) in 16S rRNA + S-adenosyl-L-methionine = N(4)-methylcytidine(1402) in 16S rRNA + S-adenosyl-L-homocysteine + H(+). Functionally, specifically methylates the N4 position of cytidine in position 1402 (C1402) of 16S rRNA. This is Ribosomal RNA small subunit methyltransferase H 2 from Alkaliphilus metalliredigens (strain QYMF).